We begin with the raw amino-acid sequence, 236 residues long: Translocon-associated protein subunit alpha (236 aa).

The first 20 residues, 1 to 20 (MNKLITLLLAVLMIISCVYS), serve as a signal peptide directing secretion. At 21 to 163 (DDVEITDDEV…TEKETSFDMD (143 aa)) the chain is on the lumenal side. N-linked (GlcNAc...) asparagine glycans are attached at residues N74, N94, N141, N148, and N152. Residues 164-184 (SFFLILLGLGFVGGIGYIVYG) traverse the membrane as a helical segment. Residues 185-236 (KMPKQKKVRTVSKVNKNAVRVETEDETAEWLSGTSAASSKVKSVQKVVKKNK) lie on the Cytoplasmic side of the membrane.

This sequence belongs to the TRAP-alpha family. Heterotrimer of TRAP-alpha, TRAP-beta and TRAP-gamma. Phosphorylated in its cytoplasmic tail.

The protein localises to the endoplasmic reticulum membrane. Its function is as follows. TRAP proteins are part of a complex whose function is to bind calcium to the ER membrane and thereby regulate the retention of ER resident proteins. In Dictyostelium discoideum (Social amoeba), this protein is Translocon-associated protein subunit alpha (ssr1).